A 396-amino-acid polypeptide reads, in one-letter code: Argininosuccinate synthase (396 aa).

An ATP-binding site is contributed by 9–17 (AFSGGLDTT). Tyr-86 contacts L-citrulline. Residue Gly-116 coordinates ATP. L-aspartate contacts are provided by Thr-118, Asn-122, and Asp-123. Asn-122 serves as a coordination point for L-citrulline. L-citrulline is bound by residues Arg-126, Ser-172, Ser-181, Glu-254, and Tyr-266.

The protein belongs to the argininosuccinate synthase family. Type 1 subfamily. As to quaternary structure, homotetramer.

The protein resides in the cytoplasm. It carries out the reaction L-citrulline + L-aspartate + ATP = 2-(N(omega)-L-arginino)succinate + AMP + diphosphate + H(+). It participates in amino-acid biosynthesis; L-arginine biosynthesis; L-arginine from L-ornithine and carbamoyl phosphate: step 2/3. The polypeptide is Argininosuccinate synthase (Halobacterium salinarum (strain ATCC 700922 / JCM 11081 / NRC-1) (Halobacterium halobium)).